The following is a 202-amino-acid chain: Thymidylate kinase (202 aa).

7 to 14 (GIDGSGKT) contacts ATP.

Belongs to the thymidylate kinase family.

The enzyme catalyses dTMP + ATP = dTDP + ADP. Functionally, phosphorylation of dTMP to form dTDP in both de novo and salvage pathways of dTTP synthesis. The protein is Thymidylate kinase of Ehrlichia chaffeensis (strain ATCC CRL-10679 / Arkansas).